The primary structure comprises 426 residues: Serine--tRNA ligase (426 aa).

L-serine is bound at residue 233-235; sequence TAE. 264-266 lines the ATP pocket; it reads RSE. L-serine is bound at residue E287. Residue 351 to 354 coordinates ATP; sequence EISS. L-serine is bound at residue S387.

The protein belongs to the class-II aminoacyl-tRNA synthetase family. Type-1 seryl-tRNA synthetase subfamily. In terms of assembly, homodimer. The tRNA molecule binds across the dimer.

It is found in the cytoplasm. It catalyses the reaction tRNA(Ser) + L-serine + ATP = L-seryl-tRNA(Ser) + AMP + diphosphate + H(+). It carries out the reaction tRNA(Sec) + L-serine + ATP = L-seryl-tRNA(Sec) + AMP + diphosphate + H(+). It functions in the pathway aminoacyl-tRNA biosynthesis; selenocysteinyl-tRNA(Sec) biosynthesis; L-seryl-tRNA(Sec) from L-serine and tRNA(Sec): step 1/1. Catalyzes the attachment of serine to tRNA(Ser). Is also able to aminoacylate tRNA(Sec) with serine, to form the misacylated tRNA L-seryl-tRNA(Sec), which will be further converted into selenocysteinyl-tRNA(Sec). The sequence is that of Serine--tRNA ligase from Pseudomonas fluorescens (strain Pf0-1).